A 210-amino-acid chain; its full sequence is Guanylate kinase (210 aa).

The Guanylate kinase-like domain maps to 5 to 183 (GILFVISAPS…AVEEFKSIIL (179 aa)). 12-19 (APSGAGKT) contacts ATP.

The protein belongs to the guanylate kinase family.

It is found in the cytoplasm. It catalyses the reaction GMP + ATP = GDP + ADP. Its function is as follows. Essential for recycling GMP and indirectly, cGMP. The protein is Guanylate kinase of Syntrophotalea carbinolica (strain DSM 2380 / NBRC 103641 / GraBd1) (Pelobacter carbinolicus).